The primary structure comprises 386 residues: Succinate--CoA ligase [ADP-forming] subunit beta (386 aa).

Positions 9–244 (KALFREHGIP…ETQEDAREAR (236 aa)) constitute an ATP-grasp domain. Residues K46, 53–55 (GRG), E99, T102, and E107 contribute to the ATP site. Mg(2+) is bound by residues N199 and D213. Substrate is bound by residues N264 and 321 to 323 (GIV).

This sequence belongs to the succinate/malate CoA ligase beta subunit family. In terms of assembly, heterotetramer of two alpha and two beta subunits. It depends on Mg(2+) as a cofactor.

It catalyses the reaction succinate + ATP + CoA = succinyl-CoA + ADP + phosphate. It carries out the reaction GTP + succinate + CoA = succinyl-CoA + GDP + phosphate. The protein operates within carbohydrate metabolism; tricarboxylic acid cycle; succinate from succinyl-CoA (ligase route): step 1/1. Its function is as follows. Succinyl-CoA synthetase functions in the citric acid cycle (TCA), coupling the hydrolysis of succinyl-CoA to the synthesis of either ATP or GTP and thus represents the only step of substrate-level phosphorylation in the TCA. The beta subunit provides nucleotide specificity of the enzyme and binds the substrate succinate, while the binding sites for coenzyme A and phosphate are found in the alpha subunit. The chain is Succinate--CoA ligase [ADP-forming] subunit beta from Thioalkalivibrio sulfidiphilus (strain HL-EbGR7).